Here is a 782-residue protein sequence, read N- to C-terminus: MVRTKNQSSSSSASSSTKSPVKISGGTTNRSRSCSDALIDDGNSKSSSKPTSNNRQRTTTNNNTTAITTTPGSSPDNDDDDTTTTDADLTPTSGNAPRGGNSSVHKQNLYVVSFPIIFLFNVLRSLIYQLFCIFRYLYGASTKVIYRSPNRRDCNIEIVVQNSKEQQQQHQHQQAIIHCPLERRGNISGIEQTLAQALPQRQRAIQPLEMAGNRAGGNYSPGPGDPLLAKQKHHHRRAFEYISKALKIDEENEGHKELAIELYRKGIKELEDGIAVDCWSGRGDVWDRAQRLHDKMQTNLSMARDRLHFLALREEDLQLQRLSLKEQQQKKKSPQQQPQQQQQHTFKQPMLVGQTNSSGGSGSTKVPLRSSGYGLKPSATNISRAMPAASGRKLTIGNKRPGNLPVVNKSQTLPRNLGSKTSSTSVGAALQRQPGKTAATPPAVRRQFSSGRNTPPQRSRTPINNNAAGGSGSGASTPMVSVKGVEQKLVQLILDEIVEGGAKVEWTDIAGQDVAKQALQEMVILPSVRPELFTGLRAPAKGLLLFGPPGNGKTLLARAVATECSATFLNISAASLTSKYVGDGEKLVRALFAVARHMQPSIIFIDEVDSLLSERSSNEHEASRRLKTEFLVEFDGLPGNPDGDRIVVLAATNRPQELDEAALRRFTKRVYVSLPDVQTRELLLNRLLQKQGSPLDSDALGRLAKITEGYSGSDLTALAKDAALEPIRELNVEQVKCLDISAMRQITEKDFHNSLKRIRRSVAPQSLNSYEKWSQDYGDITI.

A disordered region spans residues 1-103 (MVRTKNQSSS…GNAPRGGNSS (103 aa)). Residues 1–115 (MVRTKNQSSS…KQNLYVVSFP (115 aa)) lie on the Cytoplasmic side of the membrane. Residues 1–212 (MVRTKNQSSS…RAIQPLEMAG (212 aa)) are required for localization to punctate cytoplasmic foci. Residues 8–19 (SSSSSASSSTKS) are compositionally biased toward low complexity. Positions 25–34 (GGTTNRSRSC) are enriched in polar residues. 2 stretches are compositionally biased toward low complexity: residues 44 to 75 (SKSSSKPTSNNRQRTTTNNNTTAITTTPGSSP) and 84 to 93 (TTDADLTPTS). Residues 116 to 136 (IIFLFNVLRSLIYQLFCIFRY) constitute an intramembrane region (helical). Residues 137 to 782 (LYGASTKVIY…WSQDYGDITI (646 aa)) lie on the Cytoplasmic side of the membrane. The sufficient for interaction with microtubules and microtubule severing stretch occupies residues 210-782 (MAGNRAGGNY…WSQDYGDITI (573 aa)). The region spanning 235–310 (HRRAFEYISK…SMARDRLHFL (76 aa)) is the MIT domain. Residues 325 to 479 (KEQQQKKKSP…GSGSGASTPM (155 aa)) are disordered. The segment covering 334–343 (PQQQPQQQQQ) has biased composition (low complexity). Polar residues-rich tracts occupy residues 408 to 426 (NKSQTLPRNLGSKTSSTSV) and 447 to 463 (QFSSGRNTPPQRSRTPI). The tract at residues 465-479 (NNAAGGSGSGASTPM) is required for interaction with microtubules. 547–554 (GPPGNGKT) contacts ATP.

This sequence belongs to the AAA ATPase family. Spastin subfamily. As to quaternary structure, homohexamer. The homohexamer is stabilized by ATP-binding. The homohexamer may adopt a ring conformation through which microtubules pass prior to being severed. Interacts with microtubules. Interacts with atl; may be involved in microtubule dynamics.

It is found in the membrane. The protein localises to the cytoplasm. It localises to the cytoskeleton. The protein resides in the microtubule organizing center. Its subcellular location is the centrosome. It is found in the chromosome. The protein localises to the lipid droplet. The catalysed reaction is n ATP + n H2O + a microtubule = n ADP + n phosphate + (n+1) alpha/beta tubulin heterodimers.. Its function is as follows. ATP-dependent microtubule severing protein. Stimulates microtubule minus-end depolymerization and poleward microtubule flux in the mitotic spindle. Regulates microtubule stability in the neuromuscular junction synapse. Involved in lipid metabolism by regulating the size and distribution of lipid droplets. Involved in axon regeneration by regulating microtubule severing. In Drosophila grimshawi (Hawaiian fruit fly), this protein is Spastin.